Here is a 91-residue protein sequence, read N- to C-terminus: Ribonuclease P protein component 4 (91 aa).

Zn(2+)-binding residues include Cys55, Cys58, Cys78, and Cys81.

The protein belongs to the eukaryotic/archaeal RNase P protein component 4 family. As to quaternary structure, consists of a catalytic RNA component and at least 4-5 protein subunits. Zn(2+) serves as cofactor.

It is found in the cytoplasm. It carries out the reaction Endonucleolytic cleavage of RNA, removing 5'-extranucleotides from tRNA precursor.. Part of ribonuclease P, a protein complex that generates mature tRNA molecules by cleaving their 5'-ends. The polypeptide is Ribonuclease P protein component 4 (Thermoplasma acidophilum (strain ATCC 25905 / DSM 1728 / JCM 9062 / NBRC 15155 / AMRC-C165)).